The chain runs to 46 residues: Protein PsbN (46 aa).

The helical transmembrane segment at leucine 10 to phenylalanine 30 threads the bilayer.

The protein belongs to the PsbN family.

The protein resides in the cellular thylakoid membrane. May play a role in photosystem I and II biogenesis. This Prochlorococcus marinus (strain MIT 9211) protein is Protein PsbN.